The chain runs to 519 residues: Glucoamylase GLU1 (519 aa).

Positions 1 to 27 (MKFGVLFSVFAAIVSALPLQEGPLNKR) are cleaved as a signal peptide. N-linked (GlcNAc...) asparagine glycosylation is found at Asn-115 and Asn-127. Trp-166 contacts substrate. Asn-205 carries N-linked (GlcNAc...) asparagine glycosylation. The active-site Proton acceptor is the Asp-234. The active-site Proton donor is the Glu-237.

Belongs to the glycosyl hydrolase 15 family.

The enzyme catalyses Hydrolysis of terminal (1-&gt;4)-linked alpha-D-glucose residues successively from non-reducing ends of the chains with release of beta-D-glucose.. The polypeptide is Glucoamylase GLU1 (GLU1) (Saccharomycopsis fibuligera (Yeast)).